The primary structure comprises 715 residues: uncharacterized protein (715 aa).

Disordered regions lie at residues 192–216 (ASSV…SVTA), 300–348 (NEEV…TSKR), 461–481 (ASSS…RSNE), and 580–630 (FTVS…KPPK). Positions 202-213 (NNTSPYPPSNSS) are enriched in low complexity. 2 stretches are compositionally biased toward polar residues: residues 301-326 (EEVS…NKND) and 472-481 (HLGTSLRSNE). Over residues 601 to 614 (TDSSPSDTISSSPT) the composition is skewed to low complexity.

This is an uncharacterized protein from Schizosaccharomyces pombe (strain 972 / ATCC 24843) (Fission yeast).